A 273-amino-acid polypeptide reads, in one-letter code: Pyrroline-5-carboxylate reductase (273 aa).

It belongs to the pyrroline-5-carboxylate reductase family.

It localises to the cytoplasm. The catalysed reaction is L-proline + NADP(+) = (S)-1-pyrroline-5-carboxylate + NADPH + 2 H(+). It carries out the reaction L-proline + NAD(+) = (S)-1-pyrroline-5-carboxylate + NADH + 2 H(+). It participates in amino-acid biosynthesis; L-proline biosynthesis; L-proline from L-glutamate 5-semialdehyde: step 1/1. The polypeptide is Pyrroline-5-carboxylate reductase (PROC) (Pisum sativum (Garden pea)).